The following is a 1103-amino-acid chain: Platelet-derived growth factor receptor beta (1103 aa).

Residues 1–31 (MQVPGTMPAPVLKGQALWLPLLLMLSPQASG) form the signal peptide. 5 Ig-like C2-type domains span residues 33–120 (LVIT…YIFV), 129–210 (PVDP…YSLQ), 214–309 (INVS…INVT), 331–403 (HRSR…HEDA), and 416–524 (PVRV…VTVV). Topologically, residues 33–532 (LVITPPGPEL…VVPHSLPFKV (500 aa)) are extracellular. Asn-45 and Asn-89 each carry an N-linked (GlcNAc...) asparagine glycan. Disulfide bonds link Cys-54/Cys-100 and Cys-149/Cys-190. Asn-215 and Asn-230 each carry an N-linked (GlcNAc...) asparagine glycan. Cysteines 235 and 291 form a disulfide. Asn-292, Asn-307, Asn-354, Asn-371, Asn-468, and Asn-479 each carry an N-linked (GlcNAc...) asparagine glycan. Cys-436 and Cys-508 are joined by a disulfide. Residues 533–553 (VVISAILALVVLTIISLIILI) traverse the membrane as a helical segment. Residues 554 to 1103 (MLWQKKPRYE…PRAEAEDSFL (550 aa)) are Cytoplasmic-facing. Phosphotyrosine; by autocatalysis is present on residues Tyr-562, Tyr-579, and Tyr-581. One can recognise a Protein kinase domain in the interval 600–962 (LVLGRTLGSG…QLVLLLERLL (363 aa)). ATP is bound by residues 606–614 (LGSGAFGQV) and Lys-634. A Phosphotyrosine; by ABL1 and ABL2 modification is found at Tyr-686. Tyr-716, Tyr-740, Tyr-751, Tyr-763, Tyr-771, Tyr-775, and Tyr-778 each carry phosphotyrosine; by autocatalysis. Asp-826 functions as the Proton acceptor in the catalytic mechanism. Phosphotyrosine; by autocatalysis is present on Tyr-857. A phosphotyrosine; by ABL1 and ABL2 mark is found at Tyr-934 and Tyr-970. Phosphotyrosine; by autocatalysis occurs at positions 1009 and 1021. A disordered region spans residues 1017-1103 (GDNDYIIPLP…PRAEAEDSFL (87 aa)). A compositionally biased stretch (polar residues) spans 1039–1059 (SSPSLASSTLNEVNTSSTISC). Positions 1065-1075 (PQEEPEPEPEP) are enriched in acidic residues. Over residues 1076–1086 (QPEPQVVPEPP) the composition is skewed to pro residues.

It belongs to the protein kinase superfamily. Tyr protein kinase family. CSF-1/PDGF receptor subfamily. As to quaternary structure, interacts with homodimeric PDGFB and PDGFD, and with heterodimers formed by PDGFA and PDGFB. May also interact with homodimeric PDGFC. Monomer in the absence of bound ligand. Interaction with homodimeric PDGFB, heterodimers formed by PDGFA and PDGFB or homodimeric PDGFD, leads to receptor dimerization, where both PDGFRA homodimers and heterodimers with PDGFRB are observed. Interacts with SH2B2/APS. Interacts directly (tyrosine phosphorylated) with SHB. Interacts (tyrosine phosphorylated) with PIK3R1 and RASA1. Interacts (tyrosine phosphorylated) with CBL. Interacts (tyrosine phosphorylated) with SRC and SRC family kinases. Interacts (tyrosine phosphorylated) with PIK3C2B, maybe indirectly. Interacts (tyrosine phosphorylated) with SHC1, GRB7, GRB10 and NCK1. Interaction with GRB2 is mediated by SHC1. Interacts (via C-terminus) with NHERF1. N-glycosylated. In terms of processing, ubiquitinated. After autophosphorylation, the receptor is polyubiquitinated, leading to its degradation. Post-translationally, autophosphorylated on tyrosine residues upon ligand binding. Autophosphorylation occurs in trans, i.e. one subunit of the dimeric receptor phosphorylates tyrosine residues on the other subunit. Phosphorylation at Tyr-579, and to a lesser degree, Tyr-581 is important for interaction with SRC. Phosphorylation at Tyr-716 is important for interaction with GRB2. Phosphorylation at Tyr-740 and Tyr-751 is important for interaction with PIK3R1. Phosphorylation at Tyr-751 is important for interaction with NCK1. Phosphorylation at Tyr-771 and Tyr-857 is important for interaction with RASA1/GAP. Phosphorylation at Tyr-857 is important for efficient phosphorylation of PLCG1 and PTPN11, resulting in increased phosphorylation of AKT1, MAPK1/ERK2 and/or MAPK3/ERK1, PDCD6IP/ALIX and STAM, and in increased cell proliferation. Phosphorylation at Tyr-1009 is important for interaction with PTPN11. Phosphorylation at Tyr-1009 and Tyr-1021 is important for interaction with PLCG1. Dephosphorylated by PTPRJ at Tyr-751, Tyr-857, Tyr-1009 and Tyr-1021. Dephosphorylated by PTPN2 at Tyr-579 and Tyr-1021.

The protein resides in the cell membrane. The protein localises to the cytoplasmic vesicle. It is found in the lysosome lumen. It catalyses the reaction L-tyrosyl-[protein] + ATP = O-phospho-L-tyrosyl-[protein] + ADP + H(+). Its activity is regulated as follows. Present in an inactive conformation in the absence of bound ligand. Binding of PDGFB and/or PDGFD leads to dimerization and activation by autophosphorylation on tyrosine residues. Its function is as follows. Tyrosine-protein kinase that acts as a cell-surface receptor for homodimeric PDGFB and PDGFD and for heterodimers formed by PDGFA and PDGFB, and plays an essential role in the regulation of embryonic development, cell proliferation, survival, differentiation, chemotaxis and migration. Plays an essential role in blood vessel development by promoting proliferation, migration and recruitment of pericytes and smooth muscle cells to endothelial cells. Plays a role in the migration of vascular smooth muscle cells and the formation of neointima at vascular injury sites. Required for normal development of the cardiovascular system. Required for normal recruitment of pericytes (mesangial cells) in the kidney glomerulus, and for normal formation of a branched network of capillaries in kidney glomeruli. Promotes rearrangement of the actin cytoskeleton and the formation of membrane ruffles. Binding of its cognate ligands - homodimeric PDGFB, heterodimers formed by PDGFA and PDGFB or homodimeric PDGFD -leads to the activation of several signaling cascades; the response depends on the nature of the bound ligand and is modulated by the formation of heterodimers between PDGFRA and PDGFRB. Phosphorylates PLCG1, PIK3R1, PTPN11, RASA1/GAP, CBL, SHC1 and NCK1. Activation of PLCG1 leads to the production of the cellular signaling molecules diacylglycerol and inositol 1,4,5-trisphosphate, mobilization of cytosolic Ca(2+) and the activation of protein kinase C. Phosphorylation of PIK3R1, the regulatory subunit of phosphatidylinositol 3-kinase, leads to the activation of the AKT1 signaling pathway. Phosphorylation of SHC1, or of the C-terminus of PTPN11, creates a binding site for GRB2, resulting in the activation of HRAS, RAF1 and down-stream MAP kinases, including MAPK1/ERK2 and/or MAPK3/ERK1. Promotes phosphorylation and activation of SRC family kinases. Promotes phosphorylation of PDCD6IP/ALIX and STAM. Receptor signaling is down-regulated by protein phosphatases that dephosphorylate the receptor and its down-stream effectors, and by rapid internalization of the activated receptor. The chain is Platelet-derived growth factor receptor beta (PDGFRB) from Canis lupus familiaris (Dog).